A 312-amino-acid chain; its full sequence is Protoheme IX farnesyltransferase (312 aa).

The next 8 membrane-spanning stretches (helical) occupy residues valine 31 to histidine 51, proline 52 to leucine 72, isoleucine 119 to isoleucine 139, isoleucine 152 to glycine 172, isoleucine 179 to phenylalanine 199, isoleucine 225 to phenylalanine 245, valine 247 to valine 267, and isoleucine 288 to leucine 308.

This sequence belongs to the UbiA prenyltransferase family. Protoheme IX farnesyltransferase subfamily.

The protein resides in the cell inner membrane. It catalyses the reaction heme b + (2E,6E)-farnesyl diphosphate + H2O = Fe(II)-heme o + diphosphate. The protein operates within porphyrin-containing compound metabolism; heme O biosynthesis; heme O from protoheme: step 1/1. Functionally, converts heme B (protoheme IX) to heme O by substitution of the vinyl group on carbon 2 of heme B porphyrin ring with a hydroxyethyl farnesyl side group. This is Protoheme IX farnesyltransferase from Rhodopseudomonas palustris (strain ATCC BAA-98 / CGA009).